The following is a 163-amino-acid chain: Ribonuclease P protein subunit p25-like protein (163 aa).

2 disordered regions span residues 1-24 (MEQY…LPPD) and 126-163 (LDPS…DTRS). The span at 153 to 163 (RPRRRARDTRS) shows a compositional bias: basic residues.

It belongs to the histone-like Alba family.

It localises to the nucleus. Functionally, may be a component of ribonuclease P or MRP. This Mus musculus (Mouse) protein is Ribonuclease P protein subunit p25-like protein (Rpp25l).